A 107-amino-acid polypeptide reads, in one-letter code: ATP-dependent Clp protease adapter protein ClpS (107 aa).

Belongs to the ClpS family. Binds to the N-terminal domain of the chaperone ClpA.

Its function is as follows. Involved in the modulation of the specificity of the ClpAP-mediated ATP-dependent protein degradation. This Acinetobacter baylyi (strain ATCC 33305 / BD413 / ADP1) protein is ATP-dependent Clp protease adapter protein ClpS.